A 361-amino-acid polypeptide reads, in one-letter code: MSDAIRPQPGILDIALYEGGKSHVAGIQNALKLSSNENPFGPSPKAKEAFLRSVHTLHRYPSTDHAGLRHAIAEVHGLDPARVICGVGSDEIITFLCQAYAGPHTDVVFTEHGFLMYRISALAVGANPVEVPERERTTDVDAILAACTPHTRLVFLANPNNPTGTMIGQADLARLAAGLPAQAILVLDGAYAEYVPGYDAGLALIEERGNVVMTRTFSKIYGLGGLRVGWGYGPKAIIDVLNRIRGPFNLSTTQLETAEAAVRDQDHVARCRADNARWRIWLAEALAEIGVPSDTSMANFILARFSDTEEAEACDLHLQTQGLIVRRVAGYKLPHCLRITIGDEASCRRVAHAIGQFKRMR.

N6-(pyridoxal phosphate)lysine is present on K219.

This sequence belongs to the class-II pyridoxal-phosphate-dependent aminotransferase family. Histidinol-phosphate aminotransferase subfamily. In terms of assembly, homodimer. Requires pyridoxal 5'-phosphate as cofactor.

It catalyses the reaction L-histidinol phosphate + 2-oxoglutarate = 3-(imidazol-4-yl)-2-oxopropyl phosphate + L-glutamate. Its pathway is amino-acid biosynthesis; L-histidine biosynthesis; L-histidine from 5-phospho-alpha-D-ribose 1-diphosphate: step 7/9. This Cereibacter sphaeroides (strain ATCC 17023 / DSM 158 / JCM 6121 / CCUG 31486 / LMG 2827 / NBRC 12203 / NCIMB 8253 / ATH 2.4.1.) (Rhodobacter sphaeroides) protein is Histidinol-phosphate aminotransferase.